Reading from the N-terminus, the 1034-residue chain is AP-3 complex subunit delta (1034 aa).

HEAT repeat units lie at residues 35–72 (KYIS…LGYD), 143–180 (DLSR…RYPE), 181–217 (ALRP…KNPK), 219–255 (YLPL…LEPR), 258–297 (KKLI…GMPN), 299–337 (SASI…THPK), 338–374 (SVQA…KKNL), 376–414 (EIVK…LYVT), 415–452 (NFEW…RVPV), and 570–609 (NSAC…EIVQ). Disordered stretches follow at residues 637-660 (DLDE…EHDK), 669-688 (QAGT…ELTP), 701-723 (EQSN…NADQ), and 758-1034 (QEQQ…KEIL). Phosphoserine is present on serine 683. Position 687 is a phosphothreonine (threonine 687). Residues 769–784 (GKKKHKKGKKSKKAKN) are compositionally biased toward basic residues. Composition is skewed to basic and acidic residues over residues 822–836 (KDGK…RALD) and 882–906 (KDKD…RKEA). Positions 928-942 (SATSNNNNTSTVLPD) are enriched in low complexity. The span at 986 to 1003 (KVHKKKHKKEKSQRKEKK) shows a compositional bias: basic residues. The segment covering 1007-1016 (ESASVSAIVS) has biased composition (low complexity). Positions 1025–1034 (GISTPSKEIL) are enriched in polar residues.

This sequence belongs to the adaptor complexes large subunit family. As to quaternary structure, adaptor protein complex 3 (AP-3) is a heterotetramer composed of two large chains (delta and beta3), a medium chain (mu3) and a small chain (sigma3).

The protein localises to the cytoplasmic vesicle. The protein resides in the clathrin-coated vesicle membrane. Its subcellular location is the golgi apparatus. Part of the AP-3 complex, an adapter-related complex which is not clathrin-associated. The complex is associated with the Golgi region as well as more peripheral structures. It facilitates the budding of vesicles from the Golgi membrane and may be directly involved in trafficking to lysosomes. Functionally, may be a coat protein involved in the formation of specialized structures like pigment granules. This chain is AP-3 complex subunit delta (g), found in Drosophila melanogaster (Fruit fly).